The following is a 539-amino-acid chain: uncharacterized protein (539 aa).

6 to 20 (LIIGGGGAAARAAIE) is a binding site for FAD. Active-site residues include His-227 and Arg-243.

Belongs to the FAD-dependent oxidoreductase 2 family. FRD/SDH subfamily. It depends on FAD as a cofactor.

This is an uncharacterized protein from Methanocaldococcus jannaschii (strain ATCC 43067 / DSM 2661 / JAL-1 / JCM 10045 / NBRC 100440) (Methanococcus jannaschii).